Here is a 91-residue protein sequence, read N- to C-terminus: MANHKSAEKRIRQTLKRTERNRYYRTRIKNITKAVKEAVASNDATKAEEALKVANKDLHKFVSKGILPKNTAARKVSRLHASVKKLSAQIA.

The protein belongs to the bacterial ribosomal protein bS20 family.

Binds directly to 16S ribosomal RNA. The protein is Small ribosomal subunit protein bS20 of Wolinella succinogenes (strain ATCC 29543 / DSM 1740 / CCUG 13145 / JCM 31913 / LMG 7466 / NCTC 11488 / FDC 602W) (Vibrio succinogenes).